Here is a 321-residue protein sequence, read N- to C-terminus: o-succinylbenzoate synthase (321 aa).

Catalysis depends on lysine 110, which acts as the Proton donor. Positions 138, 165, and 188 each coordinate Mg(2+). Lysine 212 functions as the Proton acceptor in the catalytic mechanism.

Belongs to the mandelate racemase/muconate lactonizing enzyme family. MenC type 1 subfamily. A divalent metal cation is required as a cofactor.

The catalysed reaction is (1R,6R)-6-hydroxy-2-succinyl-cyclohexa-2,4-diene-1-carboxylate = 2-succinylbenzoate + H2O. Its pathway is quinol/quinone metabolism; 1,4-dihydroxy-2-naphthoate biosynthesis; 1,4-dihydroxy-2-naphthoate from chorismate: step 4/7. It participates in quinol/quinone metabolism; menaquinone biosynthesis. Its function is as follows. Converts 2-succinyl-6-hydroxy-2,4-cyclohexadiene-1-carboxylate (SHCHC) to 2-succinylbenzoate (OSB). In Mycolicibacterium smegmatis (strain ATCC 700084 / mc(2)155) (Mycobacterium smegmatis), this protein is o-succinylbenzoate synthase.